The chain runs to 220 residues: Phosphoserine phosphatase (220 aa).

Residue aspartate 11 is the Nucleophile of the active site. Aspartate 11 and aspartate 13 together coordinate Mg(2+). Aspartate 13 serves as the catalytic Proton donor. Substrate is bound by residues glutamate 20, arginine 56, 99–100 (SG), and lysine 144. Residue aspartate 167 participates in Mg(2+) binding. Asparagine 170 lines the substrate pocket.

It belongs to the HAD-like hydrolase superfamily. SerB family. It depends on Mg(2+) as a cofactor.

The catalysed reaction is O-phospho-L-serine + H2O = L-serine + phosphate. It catalyses the reaction O-phospho-D-serine + H2O = D-serine + phosphate. It functions in the pathway amino-acid biosynthesis; L-serine biosynthesis; L-serine from 3-phospho-D-glycerate: step 3/3. This is Phosphoserine phosphatase from Idiomarina loihiensis (strain ATCC BAA-735 / DSM 15497 / L2-TR).